Reading from the N-terminus, the 608-residue chain is Endo-1,4-beta-xylanase C (608 aa).

Positions 1–25 (MKTFSVTKSSVVFAMALGMASTAFA) are cleaved as a signal peptide. The region spanning 40-250 (TITSNQTGKI…VNGEVRGGHM (211 aa)) is the GH11 1 domain. The Nucleophile role is filled by Glu-142. Glu-237 (proton donor) is an active-site residue. Residues 263 to 294 (SDPVSSSSVKSSSSTDAPKSSSSKGNGNVSGK) show a composition bias toward low complexity. Residues 263 to 296 (SDPVSSSSVKSSSSTDAPKSSSSKGNGNVSGKID) form a disordered region. One can recognise a GH11 2 domain in the interval 316–514 (NSSVTGNVGS…GSGSFDVTYF (199 aa)). Glu-409 functions as the Nucleophile in the catalytic mechanism. Glu-501 functions as the Proton donor in the catalytic mechanism. The disordered stretch occupies residues 520-539 (AHPLAQPEPESSSSEAKVES). A compositionally biased stretch (low complexity) spans 527-539 (EPESSSSEAKVES).

Belongs to the glycosyl hydrolase 11 (cellulase G) family.

It catalyses the reaction Endohydrolysis of (1-&gt;4)-beta-D-xylosidic linkages in xylans.. It functions in the pathway glycan degradation; xylan degradation. Cleaves xylans with the production of xylose, xylobiose and xylo-oligosaccharides. In Fibrobacter succinogenes (strain ATCC 19169 / S85), this protein is Endo-1,4-beta-xylanase C (xynC).